Consider the following 1482-residue polypeptide: Glutamate receptor ionotropic, NMDA 2B (1482 aa).

An N-terminal signal peptide occupies residues 1–26 (MKPSAECCSPKFWLVLAVLAVSGSKA). Topologically, residues 27–557 (RSQKSAPSIG…SAFLEPFSAD (531 aa)) are extracellular. The N-linked (GlcNAc...) asparagine glycan is linked to N74. C86 and C321 are joined by a disulfide. 2 residues coordinate Zn(2+): H127 and E284. 4 N-linked (GlcNAc...) asparagine glycosylation sites follow: N341, N348, N444, and N491. 2 disulfide bridges follow: C429–C456 and C436–C457. Residues T514 and R519 each coordinate L-glutamate. N542 carries N-linked (GlcNAc...) asparagine glycosylation. A helical membrane pass occupies residues 558 to 576 (VWVMMFVMLLIVSAVAVFV). At 577-603 (FEYFSPVGYNRCLADGREPGGPSFTIG) the chain is on the cytoplasmic side. Residues 604–623 (KAIWLLWGLVFNNSVPVQNP) constitute an intramembrane region (discontinuously helical). The interval 604–623 (KAIWLLWGLVFNNSVPVQNP) is pore-forming. The Cytoplasmic segment spans residues 624–630 (KGTTSKI). Residues 631 to 646 (MVSVWAFFAVIFLASY) traverse the membrane as a helical segment. Residues 647–817 (TANLAAFMIQ…VMSSQLDIDN (171 aa)) are Extracellular-facing. N-linked (GlcNAc...) asparagine glycosylation occurs at N688. L-glutamate-binding positions include 690-691 (ST) and D732. The cysteines at positions 746 and 801 are disulfide-linked. Residues 818–837 (MAGVFYMLGAAMALSLITFI) traverse the membrane as a helical segment. Residues 838–1482 (CEHLFYWQFR…EKLSSIESDV (645 aa)) are Cytoplasmic-facing. Phosphoserine occurs at positions 882, 886, 917, and 920. Phosphotyrosine occurs at positions 962 and 1039. Residues S1058, S1061, and S1064 each carry the phosphoserine modification. The interval 1074–1097 (EGNAAKRRKQQYKDSLKKRPASAK) is disordered. A phosphotyrosine mark is found at Y1109 and Y1133. Position 1143 is a phosphoserine (S1143). Phosphotyrosine is present on Y1155. The interval 1162-1194 (FKRDSVSGGGPCTNRSHLKHGTGDKHGVVGGVP) is disordered. 2 positions are modified to phosphoserine: S1255 and S1259. Residues 1266 to 1277 (PAAPVAVSSNAS) are compositionally biased toward low complexity. Residues 1266–1301 (PAAPVAVSSNASTTKYPQSPTNSKAQKKNRNKLRRQ) form a disordered region. Over residues 1278–1289 (TTKYPQSPTNSK) the composition is skewed to polar residues. Residues 1290–1301 (AQKKNRNKLRRQ) are compositionally biased toward basic residues. The segment at 1292 to 1304 (KKNRNKLRRQHSY) is interaction with DAPK1. S1303 carries the post-translational modification Phosphoserine; by DAPK1. At Y1472 the chain carries Phosphotyrosine. A PDZ-binding motif is present at residues 1480-1482 (SDV).

The protein belongs to the glutamate-gated ion channel (TC 1.A.10.1) family. NR2B/GRIN2B subfamily. As to quaternary structure, heterotetramer. Forms heterotetrameric channels composed of two GluN1/zeta subunits (GRIN1), and two identical GluN2/epsilon subunits (GRIN2A, GRIN2B, GRIN2C or GRIN2D) or GluN3 subunits (GRIN3A or GRIN3B) (in vitro). Can also form heterotetrameric channels that contain at least two GluN1 subunits and at least two different GluN2 subunits (or a combination of one GluN2 and one GluN3 subunits) (in vitro). In vivo, the subunit composition may depend on the expression levels of the different subunits. Found in a complex with GRIN1, GRIN3A and PPP2CB. Interacts with MAGI3. Interacts with HIP1 and NETO1. Interacts with PDZ domains of PATJ, DLG3 and DLG4. Interacts with DAPK1. Found in a complex with GRIN1 and PRR7. Interacts with PRR7. Interacts with CAMK2A. Interacts with ARC; preventing ARC oligomerization. Interacts with TMEM25. Interacts (via the extreme C-terminus) with FRMPD2 (via the second PDZ domain); the interaction is direct and is likely to promote NMDAR-mediated neural signal transmission. GRIN2A binds FRMPD2 with lower affinity than GRIN2B. Interacts with FAM81A; the interaction facilitates condensate formation via liquid-liquid phase separation. Post-translationally, phosphorylated on tyrosine residues. Phosphorylation at Ser-1303 by DAPK1 enhances synaptic NMDA receptor channel activity. In terms of tissue distribution, detected in brain (at protein level). Detected throughout the brain, and in brain stem trigeminal nucleus. Detected in forebrain.

It localises to the cell membrane. It is found in the postsynaptic cell membrane. The protein resides in the cell projection. The protein localises to the dendrite. Its subcellular location is the late endosome. It localises to the lysosome. It is found in the cytoplasm. The protein resides in the cytoskeleton. It carries out the reaction Ca(2+)(in) = Ca(2+)(out). The catalysed reaction is Na(+)(in) = Na(+)(out). It catalyses the reaction K(+)(in) = K(+)(out). Component of N-methyl-D-aspartate (NMDA) receptors (NMDARs) that function as heterotetrameric, ligand-gated cation channels with high calcium permeability and voltage-dependent block by Mg(2+). Participates in synaptic plasticity for learning and memory formation by contributing to the long-term depression (LTD) of hippocampus membrane currents. Channel activation requires binding of the neurotransmitter L-glutamate to the GluN2 subunit, glycine or D-serine binding to the GluN1 subunit, plus membrane depolarization to eliminate channel inhibition by Mg(2+). NMDARs mediate simultaneously the potasium efflux and the influx of calcium and sodium. Each GluN2 subunit confers differential attributes to channel properties, including activation, deactivation and desensitization kinetics, pH sensitivity, Ca2(+) permeability, and binding to allosteric modulators. In concert with DAPK1 at extrasynaptic sites, acts as a central mediator for stroke damage. Its phosphorylation at Ser-1303 by DAPK1 enhances synaptic NMDA receptor channel activity inducing injurious Ca2+ influx through them, resulting in an irreversible neuronal death. This is Glutamate receptor ionotropic, NMDA 2B from Mus musculus (Mouse).